The sequence spans 121 residues: Basic phospholipase A2 VRV-PL-V (121 aa).

7 cysteine pairs are disulfide-bonded: C26/C115, C28/C44, C43/C95, C49/C121, C50/C88, C57/C81, and C75/C86. 3 residues coordinate Ca(2+): Y27, G29, and G31. H47 is a catalytic residue. D48 provides a ligand contact to Ca(2+). D89 is an active-site residue.

Belongs to the phospholipase A2 family. Group II subfamily. D49 sub-subfamily. As to quaternary structure, monomer. The cofactor is Ca(2+). Expressed by the venom gland.

It localises to the secreted. It carries out the reaction a 1,2-diacyl-sn-glycero-3-phosphocholine + H2O = a 1-acyl-sn-glycero-3-phosphocholine + a fatty acid + H(+). Its function is as follows. Snake venom phospholipase A2 (PLA2) that has a low enzymatic activity. PLA2 catalyzes the calcium-dependent hydrolysis of the 2-acyl groups in 3-sn-phosphoglycerides. This Daboia russelii (Russel's viper) protein is Basic phospholipase A2 VRV-PL-V.